Consider the following 286-residue polypeptide: Thymidylate synthase (286 aa).

Residue 140-141 coordinates dUMP; that stretch reads RR. The Nucleophile role is filled by Cys161. DUMP-binding positions include 185–188, Asn196, and 226–228; these read RSND and HIY. Asp188 lines the (6R)-5,10-methylene-5,6,7,8-tetrahydrofolate pocket. Ala285 is a binding site for (6R)-5,10-methylene-5,6,7,8-tetrahydrofolate.

The protein belongs to the thymidylate synthase family. Bacterial-type ThyA subfamily. In terms of assembly, homodimer.

Its subcellular location is the cytoplasm. It carries out the reaction dUMP + (6R)-5,10-methylene-5,6,7,8-tetrahydrofolate = 7,8-dihydrofolate + dTMP. The protein operates within pyrimidine metabolism; dTTP biosynthesis. In terms of biological role, catalyzes the reductive methylation of 2'-deoxyuridine-5'-monophosphate (dUMP) to 2'-deoxythymidine-5'-monophosphate (dTMP) while utilizing 5,10-methylenetetrahydrofolate (mTHF) as the methyl donor and reductant in the reaction, yielding dihydrofolate (DHF) as a by-product. This enzymatic reaction provides an intracellular de novo source of dTMP, an essential precursor for DNA biosynthesis. The protein is Thymidylate synthase of Streptococcus thermophilus (strain ATCC BAA-250 / LMG 18311).